The chain runs to 447 residues: GTPase Der (447 aa).

2 EngA-type G domains span residues 4 to 165 (QIIT…PEEE) and 180 to 357 (LQIV…KIWN). GTP-binding positions include 10-17 (GRPNVGKS), 57-61 (DTPGL), 119-122 (NKCE), 186-193 (GRPNAGKS), 233-237 (DTAGL), and 298-301 (NKWD). A KH-like domain is found at 358–443 (KKITTSKLNE…PIRFIYVKTK (86 aa)).

Belongs to the TRAFAC class TrmE-Era-EngA-EngB-Septin-like GTPase superfamily. EngA (Der) GTPase family. Associates with the 50S ribosomal subunit.

Functionally, GTPase that plays an essential role in the late steps of ribosome biogenesis. The protein is GTPase Der of Rickettsia peacockii (strain Rustic).